The following is a 1133-amino-acid chain: DNA-directed RNA polymerase subunit beta (1133 aa).

A disordered region spans residues 1085–1133 (ADVSSRHTPSRPTYESVTSEDLSPAAGGTFTLARRSREEDEDREEEDDF). A compositionally biased stretch (polar residues) spans 1090 to 1105 (RHTPSRPTYESVTSED). Acidic residues predominate over residues 1123-1133 (EDEDREEEDDF).

Belongs to the RNA polymerase beta chain family. In cyanobacteria the RNAP catalytic core is composed of 2 alpha, 1 beta, 1 beta', 1 gamma and 1 omega subunit. When a sigma factor is associated with the core the holoenzyme is formed, which can initiate transcription.

The catalysed reaction is RNA(n) + a ribonucleoside 5'-triphosphate = RNA(n+1) + diphosphate. DNA-dependent RNA polymerase catalyzes the transcription of DNA into RNA using the four ribonucleoside triphosphates as substrates. The protein is DNA-directed RNA polymerase subunit beta of Synechococcus sp. (strain JA-3-3Ab) (Cyanobacteria bacterium Yellowstone A-Prime).